The sequence spans 1012 residues: AP-2 complex subunit alpha-1 (1012 aa).

HEAT repeat units lie at residues 254 to 289, 354 to 391, 393 to 430, and 525 to 565; these read AMRA…VVKN, DIIK…VSNA, DIVE…DLSW, and PTIP…CIDV. The disordered stretch occupies residues 652–678; sequence STDPESVARSLSHPNGTLSNIDPQTPS. Polar residues predominate over residues 663–675; that stretch reads SHPNGTLSNIDPQ. Residues 742–841 enclose the GAE domain; it reads ALCLKDSGVL…LDFSYKFGAN (100 aa).

The protein belongs to the adaptor complexes large subunit family. In terms of assembly, adaptor protein complex 2 (AP-2) is a heterotetramer composed of two large adaptins (alpha-type and beta-type subunits), a medium adaptin (mu-type subunit) and a small adaptin (sigma-type subunit). Binds to EPSIN2.

Its subcellular location is the membrane. The protein resides in the coated pit. In terms of biological role, subunit of the adaptor protein complex 2 (AP-2). Adaptor protein complexes function in protein transport via transport vesicles in different membrane traffic pathways. Adaptor protein complexes are vesicle coat components and appear to be involved in cargo selection and vesicle formation. AP-2 is involved in clathrin-dependent endocytosis in which cargo proteins are incorporated into vesicles surrounded by clathrin (clathrin-coated vesicles, CCVs) which are destined for fusion with the early endosome. The complex binds polyphosphoinositides. The polypeptide is AP-2 complex subunit alpha-1 (ALPHA-ADR) (Arabidopsis thaliana (Mouse-ear cress)).